Reading from the N-terminus, the 632-residue chain is Probable potassium transport system protein Kup (632 aa).

12 helical membrane-spanning segments follow: residues 19–39, 59–79, 110–130, 146–166, 178–198, 221–241, 256–276, 298–318, 346–366, 375–395, 403–423, and 428–448; these read LVVG…LYSL, IISM…VMFV, LIMM…VITP, PGLS…LFFI, FGPI…IHLV, LQAF…EALY, WFVL…AMLL, MVLL…SGAF, IYMP…VLAF, AYGI…ALVM, PALV…FFAA, and IAEG…LLMT.

The protein belongs to the HAK/KUP transporter (TC 2.A.72) family.

It localises to the cell inner membrane. It catalyses the reaction K(+)(in) + H(+)(in) = K(+)(out) + H(+)(out). Transport of potassium into the cell. Likely operates as a K(+):H(+) symporter. The sequence is that of Probable potassium transport system protein Kup from Cupriavidus metallidurans (strain ATCC 43123 / DSM 2839 / NBRC 102507 / CH34) (Ralstonia metallidurans).